A 600-amino-acid polypeptide reads, in one-letter code: Elongation factor 4 (600 aa).

The region spanning 5–187 is the tr-type G domain; the sequence is KYIRNFSIIA…AIINKLPAPK (183 aa). GTP contacts are provided by residues 17-22 and 134-137; these read DHGKST and NKID.

It belongs to the TRAFAC class translation factor GTPase superfamily. Classic translation factor GTPase family. LepA subfamily.

The protein localises to the cell inner membrane. The enzyme catalyses GTP + H2O = GDP + phosphate + H(+). Required for accurate and efficient protein synthesis under certain stress conditions. May act as a fidelity factor of the translation reaction, by catalyzing a one-codon backward translocation of tRNAs on improperly translocated ribosomes. Back-translocation proceeds from a post-translocation (POST) complex to a pre-translocation (PRE) complex, thus giving elongation factor G a second chance to translocate the tRNAs correctly. Binds to ribosomes in a GTP-dependent manner. This Rickettsia prowazekii (strain Madrid E) protein is Elongation factor 4.